Here is a 62-residue protein sequence, read N- to C-terminus: GEGACCNNCDFICGRAGFSRCRCLDLVTKCHPSCSNCEMTETPYWPCRYQCLDMDPDDCATP.

5 disulfide bridges follow: Cys-5-Cys-59, Cys-6-Cys-23, Cys-13-Cys-21, Cys-30-Cys-37, and Cys-34-Cys-51.

This sequence belongs to the Bowman-Birk serine protease inhibitor family. In terms of tissue distribution, expressed in bulb (at protein level).

In terms of biological role, serine protease inhibitor. Inhibits trypsin (Ki = 65 nM) and weakly inhibits chymotrypsin (Ki = 295 nM). Does not inhibit bacterial subtilisin. This chain is Bowman-Birk type proteinase inhibitor B7, found in Hyacinthus orientalis (Common hyacinth).